We begin with the raw amino-acid sequence, 281 residues long: UPF0500 protein C1orf216 homolog (281 aa).

Over residues 1–12 the composition is skewed to polar residues; that stretch reads MFTIQKPDTVSH. The interval 1–197 is disordered; the sequence is MFTIQKPDTV…SSSDSDSISV (197 aa). A compositionally biased stretch (basic and acidic residues) spans 45-74; it reads TYDKNENWSQDKKGGEEGENKSKSEDEHSS. 3 stretches are compositionally biased toward low complexity: residues 92–102, 147–161, and 169–178; these read STGSEGISLSS, SSSL…VSAS, and PAPTTTPQEN. Positions 179 to 190 are enriched in acidic residues; it reads PETEDSDVESSS. Positions 198–257 form a coiled coil; sequence TLSEAFQSLQDKEKLKEREKEKHHAQLTMYRRLALLRWIRALQQKVRDQQNRLQESFDTI.

The protein belongs to the UPF0500 family.

In Xenopus laevis (African clawed frog), this protein is UPF0500 protein C1orf216 homolog.